Here is a 508-residue protein sequence, read N- to C-terminus: Maturase K (508 aa).

Belongs to the intron maturase 2 family. MatK subfamily.

It localises to the plastid. Its subcellular location is the chloroplast. Functionally, usually encoded in the trnK tRNA gene intron. Probably assists in splicing its own and other chloroplast group II introns. This Gordonia lasianthus (Loblolly bay) protein is Maturase K.